An 851-amino-acid chain; its full sequence is Envelope glycoprotein gp160 (851 aa).

The first 31 residues, methionine 1–asparagine 31, serve as a signal peptide directing secretion. Residues asparagine 32–isoleucine 679 lie on the Extracellular side of the membrane. A disulfide bridge connects residues cysteine 53 and cysteine 73. Asparagine 87, asparagine 132, asparagine 136, asparagine 143, asparagine 148, asparagine 159, asparagine 163, asparagine 193, asparagine 205, asparagine 238, asparagine 242, asparagine 249, asparagine 270, asparagine 303, asparagine 309, asparagine 339, asparagine 346, and asparagine 361 each carry an N-linked (GlcNAc...) asparagine; by host glycan. 5 cysteine pairs are disulfide-bonded: cysteine 118/cysteine 213, cysteine 125/cysteine 204, cysteine 130/cysteine 160, cysteine 226/cysteine 255, and cysteine 236/cysteine 247. The V1 stretch occupies residues cysteine 130–asparagine 159. The segment at cysteine 160–cysteine 204 is V2. Residues cysteine 304–histidine 337 are V3. A disulfide bond links cysteine 304 and cysteine 338. Residues serine 369 to histidine 379 are CD4-binding loop. Cystine bridges form between cysteine 383–cysteine 438 and cysteine 390–cysteine 411. Residues cysteine 390 to cysteine 411 are V4. N-linked (GlcNAc...) asparagine; by host glycosylation is found at asparagine 435, asparagine 441, and asparagine 455. The tract at residues arginine 449–aspartate 469 is disordered. V5 regions lie at residues aspartate 454–glycine 466 and asparagine 456–glycine 466. A compositionally biased stretch (basic and acidic residues) spans threonine 457–aspartate 469. The tract at residues alanine 507–alanine 527 is fusion peptide. An immunosuppression region spans residues lysine 569–leucine 587. Cysteine 593 and cysteine 599 are oxidised to a cystine. N-linked (GlcNAc...) asparagine; by host glycosylation is found at asparagine 606, asparagine 611, asparagine 620, and asparagine 632. The stretch at lysine 628–alanine 662 forms a coiled coil. The tract at residues alanine 657–lysine 678 is MPER; binding to GalCer. The chain crosses the membrane as a helical span at residues phenylalanine 680–valine 700. The Cytoplasmic segment spans residues asparagine 701–leucine 851. Positions tyrosine 707–leucine 710 match the YXXL motif; contains endocytosis signal motif. The interval glutamine 713 to lysine 737 is disordered. Cysteine 759 carries S-palmitoyl cysteine; by host lipidation. A Di-leucine internalization motif motif is present at residues leucine 850–leucine 851.

It belongs to the HIV-1 env protein family. In terms of assembly, the mature envelope protein (Env) consists of a homotrimer of non-covalently associated gp120-gp41 heterodimers. The resulting complex protrudes from the virus surface as a spike. There seems to be as few as 10 spikes on the average virion. Interacts with host CD4, CCR5 and CXCR4. Gp120 also interacts with the C-type lectins CD209/DC-SIGN and CLEC4M/DC-SIGNR (collectively referred to as DC-SIGN(R)). Gp120 and gp41 interact with GalCer. Gp120 interacts with host ITGA4/ITGB7 complex; on CD4+ T-cells, this interaction results in rapid activation of integrin ITGAL/LFA-1, which facilitates efficient cell-to-cell spreading of HIV-1. Gp120 interacts with cell-associated heparan sulfate; this interaction increases virus infectivity on permissive cells and may be involved in infection of CD4- cells. As to quaternary structure, the mature envelope protein (Env) consists of a homotrimer of non-covalently associated gp120-gp41 heterodimers. The resulting complex protrudes from the virus surface as a spike. There seems to be as few as 10 spikes on the average virion. In terms of processing, highly glycosylated by host. The high number of glycan on the protein is reffered to as 'glycan shield' because it contributes to hide protein sequence from adaptive immune system. Palmitoylation of the transmembrane protein and of Env polyprotein (prior to its proteolytic cleavage) is essential for their association with host cell membrane lipid rafts. Palmitoylation is therefore required for envelope trafficking to classical lipid rafts, but not for viral replication. Post-translationally, specific enzymatic cleavages in vivo yield mature proteins. Envelope glycoproteins are synthesized as an inactive precursor that is heavily N-glycosylated and processed likely by host cell furin in the Golgi to yield the mature SU and TM proteins. The cleavage site between SU and TM requires the minimal sequence [KR]-X-[KR]-R. About 2 of the 9 disulfide bonds of gp41 are reduced by P4HB/PDI, following binding to CD4 receptor.

The protein resides in the virion membrane. It localises to the host cell membrane. It is found in the host endosome membrane. In terms of biological role, oligomerizes in the host endoplasmic reticulum into predominantly trimers. In a second time, gp160 transits in the host Golgi, where glycosylation is completed. The precursor is then proteolytically cleaved in the trans-Golgi and thereby activated by cellular furin or furin-like proteases to produce gp120 and gp41. Functionally, attaches the virus to the host lymphoid cell by binding to the primary receptor CD4. This interaction induces a structural rearrangement creating a high affinity binding site for a chemokine coreceptor like CXCR4 and/or CCR5. Acts as a ligand for CD209/DC-SIGN and CLEC4M/DC-SIGNR, which are respectively found on dendritic cells (DCs), and on endothelial cells of liver sinusoids and lymph node sinuses. These interactions allow capture of viral particles at mucosal surfaces by these cells and subsequent transmission to permissive cells. HIV subverts the migration properties of dendritic cells to gain access to CD4+ T-cells in lymph nodes. Virus transmission to permissive T-cells occurs either in trans (without DCs infection, through viral capture and transmission), or in cis (following DCs productive infection, through the usual CD4-gp120 interaction), thereby inducing a robust infection. In trans infection, bound virions remain infectious over days and it is proposed that they are not degraded, but protected in non-lysosomal acidic organelles within the DCs close to the cell membrane thus contributing to the viral infectious potential during DCs' migration from the periphery to the lymphoid tissues. On arrival at lymphoid tissues, intact virions recycle back to DCs' cell surface allowing virus transmission to CD4+ T-cells. Acts as a class I viral fusion protein. Under the current model, the protein has at least 3 conformational states: pre-fusion native state, pre-hairpin intermediate state, and post-fusion hairpin state. During fusion of viral and target intracellular membranes, the coiled coil regions (heptad repeats) assume a trimer-of-hairpins structure, positioning the fusion peptide in close proximity to the C-terminal region of the ectodomain. The formation of this structure appears to drive apposition and subsequent fusion of viral and target cell membranes. Complete fusion occurs in host cell endosomes and is dynamin-dependent, however some lipid transfer might occur at the plasma membrane. The virus undergoes clathrin-dependent internalization long before endosomal fusion, thus minimizing the surface exposure of conserved viral epitopes during fusion and reducing the efficacy of inhibitors targeting these epitopes. Membranes fusion leads to delivery of the nucleocapsid into the cytoplasm. The polypeptide is Envelope glycoprotein gp160 (Homo sapiens (Human)).